The following is a 199-amino-acid chain: NAD(P)H dehydrogenase (quinone) (199 aa).

The region spanning 4–190 (VLVLYYSAYG…AGARYQGRMI (187 aa)) is the Flavodoxin-like domain. Residues 10 to 15 (SAYGHI) and 78 to 80 (TRF) contribute to the FMN site. Tyr-12 is a binding site for NAD(+). Trp-98 serves as a coordination point for substrate. FMN contacts are provided by residues 113–119 (SSATQHG) and His-134.

This sequence belongs to the WrbA family. FMN is required as a cofactor.

The enzyme catalyses a quinone + NADH + H(+) = a quinol + NAD(+). It carries out the reaction a quinone + NADPH + H(+) = a quinol + NADP(+). The sequence is that of NAD(P)H dehydrogenase (quinone) from Nitrobacter winogradskyi (strain ATCC 25391 / DSM 10237 / CIP 104748 / NCIMB 11846 / Nb-255).